The chain runs to 185 residues: MINEIKKDAQERMDKSVEALKNNLSKVRTGRAHPSLLSGISVEYYGAATPLNQVANVVAEDARTLAITVFDKELTQKVEKAIMMSDLGLNPMSAGTIIRVPLPPLTEERRKDLVKIVRGEAEGGRVAVRNIRRDANNDLKALLKDKEISEDEDRKAQEEIQKLTDVAVKKIDEVLAAKEKELMEV.

The protein belongs to the RRF family.

It is found in the cytoplasm. Responsible for the release of ribosomes from messenger RNA at the termination of protein biosynthesis. May increase the efficiency of translation by recycling ribosomes from one round of translation to another. This is Ribosome-recycling factor from Vibrio parahaemolyticus serotype O3:K6 (strain RIMD 2210633).